A 282-amino-acid polypeptide reads, in one-letter code: Acetyl-coenzyme A carboxylase carboxyl transferase subunit beta (282 aa).

A CoA carboxyltransferase N-terminal domain is found at 29 to 282 (LMKRCPNCGL…LLKYGGMQDD (254 aa)). Zn(2+)-binding residues include C33, C36, C51, and C54. The C4-type zinc-finger motif lies at 33–54 (CPNCGLEFFARRLDKYKTCPDC).

This sequence belongs to the AccD/PCCB family. In terms of assembly, acetyl-CoA carboxylase is a heterohexamer composed of biotin carboxyl carrier protein (AccB), biotin carboxylase (AccC) and two subunits each of ACCase subunit alpha (AccA) and ACCase subunit beta (AccD). Zn(2+) serves as cofactor.

It localises to the cytoplasm. It catalyses the reaction N(6)-carboxybiotinyl-L-lysyl-[protein] + acetyl-CoA = N(6)-biotinyl-L-lysyl-[protein] + malonyl-CoA. The protein operates within lipid metabolism; malonyl-CoA biosynthesis; malonyl-CoA from acetyl-CoA: step 1/1. In terms of biological role, component of the acetyl coenzyme A carboxylase (ACC) complex. Biotin carboxylase (BC) catalyzes the carboxylation of biotin on its carrier protein (BCCP) and then the CO(2) group is transferred by the transcarboxylase to acetyl-CoA to form malonyl-CoA. The protein is Acetyl-coenzyme A carboxylase carboxyl transferase subunit beta of Lactobacillus delbrueckii subsp. bulgaricus (strain ATCC 11842 / DSM 20081 / BCRC 10696 / JCM 1002 / NBRC 13953 / NCIMB 11778 / NCTC 12712 / WDCM 00102 / Lb 14).